The primary structure comprises 358 residues: Alanine racemase (358 aa).

Catalysis depends on Lys-35, which acts as the Proton acceptor; specific for D-alanine. Lys-35 carries the post-translational modification N6-(pyridoxal phosphate)lysine. Arg-130 contributes to the substrate binding site. The Proton acceptor; specific for L-alanine role is filled by Tyr-255. A substrate-binding site is contributed by Met-303.

Belongs to the alanine racemase family. Pyridoxal 5'-phosphate is required as a cofactor.

The enzyme catalyses L-alanine = D-alanine. It functions in the pathway amino-acid biosynthesis; D-alanine biosynthesis; D-alanine from L-alanine: step 1/1. In terms of biological role, catalyzes the interconversion of L-alanine and D-alanine. May also act on other amino acids. The protein is Alanine racemase (alr) of Shewanella putrefaciens (strain CN-32 / ATCC BAA-453).